Here is a 1526-residue protein sequence, read N- to C-terminus: MELSPLQPVNENMLLNKKKNEDGKKRLSVERIYQKKTQLEHILLRPDTYIGSVELVTQQMWVYDEDVGINYREVTFVPGLYKIFDEILVNAADNKQRDPKMSCIRVTMMRNNLISIWNNGKGIPVVEHKVEKMYVPALIFGQLLTSSNYDDDEKKVTGGRNGYGAKLCNIFSTKFTVETASREYKKMFKQTWMDNMGRAGDMELKPFSGEDYTCITFQPDLSKFKMQSLDKDIVALMVRRAYDIAGSTKDVKVFLNGNRLPVKGFRSYVDMYLKDKVDETGNALKVVHEQVNPRWEVCLTMSEKGFQQISFVNSIATSKGGRHVDYVADQIVSKLVDVVKKKNKGGVAVKADQVKNHMWIFGNAVIENPTFDSQTKENMTLQAKSFGSTCQLSEKFIKAAIGCGIVESILNWVKFKAQIQLNKKCSAVKHNRIKGIPKLDDANDAGSRNSAECTLILTEGDSAKTLAVSGLGVVGRDKYGVFPLRGKILNVREASHKQIMENAEINNIIKIVGLQYKKNYEDEDSLKTLRYGKIMIMTDQDQDGSHIKGLLINFIHHNWPSLLRHRFLEEFITPIVKVSKNKQEIAFYSLPEFEEWKSTNPNHKKWKVKYYKGLGTSTSKEAKEYFANMKRHRIQFKYSGPEDDAAISLAFSKKQVDDRKEWLTNFMEDRRQRKLLGLPEDYLYGQTTMYLTYNDFINKELILFSNSDNERSIPSMVDGLKPGQRKVLFTCFKRNDKREVKVAQLAGSVAEMSSYHHGEMSLMMTIINLAQNFVGSNNLNLLQPIGQFGTRLHGGKDSASPRYIFTMLSPLARLLFPSKDDHTLRFLYDDNQRVEPEWYIPIIPMVLINGAEGIGTGWSCKIPNFDVREVVNNIRRLLDGEEPLPMLPSYKNYKGTIEELASNQYVINGEVAILNSTTIEITELPIRTWTQTYKEQVLEPMLNGTEKTPPLITDYREYHTDTTVKFVIKMTEEKLAEAERVGLHKVFKLQTSLTCNSMVLFDHVGCLKKYDTVLDILRDFFELRLKYYGLRKEWLLGMLGAESSKLNNQARFILEKIDGKIVIENKPKKELIKVLIQRGYDSDPVKAWKEAQQKVPEEEENEENEESESESTSPAAESGPTFNYLLDMPLWYLTKEKKDELCKQRDEKEQELNTLKKKTPSDLWKEDLAAFVEELEVVEAKEKQDEQVGLPGKGVKAKGKKAQISEVLPSPVGKRVIPQVTMEMRAEAEKKIRRKIKSENVEGTPAEDGAEPGLRQRLEKRQKREPGTRAKKQTTLPFKPIKKAQKQNPWSDSESDMSSNESNFDVPPREKEPRIAATKAKFTADLDSDDDFSGLDEKDEDEDFFPLDDTPPKTKMPPKNTKKALKPQKSSTSVDLESDGKDSVPASPGASAADVPAETEPSKPSSKQTVGVKRTITKGQSLTSTAGTKKRAVPKETKSDSALNAHVSKKPAPAKAKNSRKRMPSSSDSSDSEFEKAISKGATSKKLKGEERDFHVDLDDTVAPRAKSGRARKPIKYLEESDDDLF.

At M1 the chain carries N-acetylmethionine. S4 is modified (phosphoserine). K17 is covalently cross-linked (Glycyl lysine isopeptide (Lys-Gly) (interchain with G-Cter in SUMO2)). ATP is bound by residues N90, N118, and 146–148 (SSN). Residues K154 and K155 each participate in a glycyl lysine isopeptide (Lys-Gly) (interchain with G-Cter in SUMO2) cross-link. 159–166 (GRNGYGAK) provides a ligand contact to ATP. Residue T280 is modified to Phosphothreonine. Positions 340 to 342 (KKK) are interaction with DNA. K350 is covalently cross-linked (Glycyl lysine isopeptide (Lys-Gly) (interchain with G-Cter in SUMO2)). 374-376 (QTK) contributes to the ATP binding site. Glycyl lysine isopeptide (Lys-Gly) (interchain with G-Cter in SUMO2) cross-links involve residues K384, K395, K414, K416, K423, and K438. A Toprim domain is found at 453–570 (CTLILTEGDS…SLLRHRFLEE (118 aa)). E459 serves as a coordination point for Mg(2+). Glycyl lysine isopeptide (Lys-Gly) (interchain with G-Cter in SUMO2) cross-links involve residues K464, K478, and K527. Residues D539 and D541 each contribute to the Mg(2+) site. Residues K582, K597, K612, K620, K623, K630, K637, K653, K660, and K674 each participate in a glycyl lysine isopeptide (Lys-Gly) (interchain with G-Cter in SUMO2) cross-link. Positions 713-1168 (IPSMVDGLKP…TPSDLWKEDL (456 aa)) constitute a Topo IIA-type catalytic domain. Y803 acts as the O-(5'-phospho-DNA)-tyrosine intermediate in catalysis. The interaction with DNA stretch occupies residues 988–997 (KLQTSLTCNS). Residue K1073 forms a Glycyl lysine isopeptide (Lys-Gly) (interchain with G-Cter in SUMO2) linkage. Residues 1087 to 1096 (AWKEAQQKVP) show a composition bias toward basic and acidic residues. The disordered stretch occupies residues 1087–1120 (AWKEAQQKVPEEEENEENEESESESTSPAAESGP). The segment covering 1097-1109 (EEEENEENEESES) has biased composition (acidic residues). Residues K1193 and K1201 each participate in a glycyl lysine isopeptide (Lys-Gly) (interchain with G-Cter in SUMO2) cross-link. S1210 carries the phosphoserine modification. Residues 1229–1526 (EKKIRRKIKS…YLEESDDDLF (298 aa)) form a disordered region. K1237 is covalently cross-linked (Glycyl lysine isopeptide (Lys-Gly) (interchain with G-Cter in SUMO1); alternate). A Glycyl lysine isopeptide (Lys-Gly) (interchain with G-Cter in SUMO2); alternate cross-link involves residue K1237. A Phosphothreonine modification is found at T1244. Positions 1254–1268 (LRQRLEKRQKREPGT) are enriched in basic and acidic residues. Glycyl lysine isopeptide (Lys-Gly) (interchain with G-Cter in SUMO2) cross-links involve residues K1272, K1279, and K1282. Residues S1291, S1293, S1295, and S1298 each carry the phosphoserine modification. At T1323 the chain carries Phosphothreonine. Residues 1326–1346 (LDSDDDFSGLDEKDEDEDFFP) show a composition bias toward acidic residues. Residues S1328 and S1333 each carry the phosphoserine modification. T1350 is subject to Phosphothreonine. Glycyl lysine isopeptide (Lys-Gly) (interchain with G-Cter in SUMO2) cross-links involve residues K1359, K1363, and K1369. Phosphoserine occurs at positions 1370 and 1373. A Glycyl lysine isopeptide (Lys-Gly) (interchain with G-Cter in SUMO2) cross-link involves residue K1381. Residues S1383 and S1387 each carry the phosphoserine modification. Polar residues predominate over residues 1417-1427 (TKGQSLTSTAG). Residue K1418 forms a Glycyl lysine isopeptide (Lys-Gly) (interchain with G-Cter in SUMO2); alternate linkage. The residue at position 1418 (K1418) is an N6-acetyllysine; alternate. The interaction with PLSCR1 stretch occupies residues 1429-1435 (KKRAVPK). K1438 is covalently cross-linked (Glycyl lysine isopeptide (Lys-Gly) (interchain with G-Cter in SUMO2); alternate). K1438 carries the N6-acetyllysine; alternate modification. Residues K1450 and K1455 each participate in a glycyl lysine isopeptide (Lys-Gly) (interchain with G-Cter in SUMO2) cross-link. Residues S1465, S1467, S1470, and S1472 each carry the phosphoserine modification. Residues K1480 and K1488 each participate in a glycyl lysine isopeptide (Lys-Gly) (interchain with G-Cter in SUMO2) cross-link. Over residues 1487–1498 (LKGEERDFHVDL) the composition is skewed to basic and acidic residues. S1521 carries the post-translational modification Phosphoserine.

It belongs to the type II topoisomerase family. Homodimer. Interacts with COPS5. Interacts with RECQL5; this stimulates DNA decatenation. Interacts with SETMAR; stimulates the topoisomerase activity. Interacts with DHX9; this interaction occurs in a E2 enzyme UBE2I- and RNA-dependent manner, negatively regulates DHX9-mediated double-stranded DNA and RNA duplex helicase activity and stimulates TOP2A-mediated supercoiled DNA relaxation activity. Interacts with HNRNPU (via C-terminus); this interaction protects the topoisomerase TOP2A from degradation and positively regulates the relaxation of supercoiled DNA in a RNA-dependent manner. Interacts with MCM3AP. Interacts with ERCC6. Interacts with PLSCR1. Interacts with GCNA; this interaction allows the resolution of topoisomerase II (TOP2A) DNA-protein cross-links. Interacts with POL1RA/RPA1 (via dock II) and UBTF in the context of Pol I complex; may assist Pol I transcription initiation by releasing supercoils occurring during DNA unwinding. Interacts with TPRN; TPRN interacts with a number of DNA damage response proteins, is recruited to sites of DNA damage and may play a role in DNA damage repair. Mg(2+) serves as cofactor. It depends on Mn(2+) as a cofactor. Ca(2+) is required as a cofactor. In terms of processing, phosphorylation has no effect on catalytic activity.

The protein localises to the cytoplasm. Its subcellular location is the nucleus. It is found in the nucleoplasm. It localises to the nucleolus. It carries out the reaction ATP-dependent breakage, passage and rejoining of double-stranded DNA.. Key decatenating enzyme that alters DNA topology by binding to two double-stranded DNA molecules, generating a double-stranded break in one of the strands, passing the intact strand through the broken strand, and religating the broken strand. May play a role in regulating the period length of BMAL1 transcriptional oscillation. The polypeptide is DNA topoisomerase 2-alpha (Top2a) (Rattus norvegicus (Rat)).